The following is an 886-amino-acid chain: Valine--tRNA ligase (886 aa).

The 'HIGH' region signature appears at Pro-53 to His-63. Residues Lys-540–Ser-544 carry the 'KMSKS' region motif. Lys-543 contacts ATP. Positions Thr-819–Asp-851 form a coiled coil.

Belongs to the class-I aminoacyl-tRNA synthetase family. ValS type 1 subfamily. Monomer.

The protein resides in the cytoplasm. The enzyme catalyses tRNA(Val) + L-valine + ATP = L-valyl-tRNA(Val) + AMP + diphosphate. In terms of biological role, catalyzes the attachment of valine to tRNA(Val). As ValRS can inadvertently accommodate and process structurally similar amino acids such as threonine, to avoid such errors, it has a 'posttransfer' editing activity that hydrolyzes mischarged Thr-tRNA(Val) in a tRNA-dependent manner. This chain is Valine--tRNA ligase, found in Mycobacterium tuberculosis (strain CDC 1551 / Oshkosh).